The following is a 431-amino-acid chain: 3'3'-cGAMP-specific phosphodiesterase 1 (431 aa).

The 117-residue stretch at 39–155 (DINHGHRVGY…IFLADRVDYL (117 aa)) folds into the HD domain. An HD-GYP domain is found at 231–427 (GVEEIMSIAM…YYQLSIAESP (197 aa)). His288 and Asp289 together coordinate a divalent metal cation. Residue Lys292 is the Proton donor of the active site. His317, His341, His342, and Asp370 together coordinate a divalent metal cation.

As to quaternary structure, monomer. Requires Ca(2+) as cofactor. The cofactor is Mg(2+).

It catalyses the reaction 3',3'-cGAMP + H2O = 5'-pApG-3' + H(+). The enzyme catalyses 5'-pApG-3' + H2O = 5'-ApG-3' + phosphate. In terms of biological role, phosphodiesterase (PDE) that catalyzes the hydrolysis of 3'3'-cyclic GMP-AMP (3'3'-cGAMP), leading to linear 5'-pApG. Also displays 5'-nucleotidase activity, further hydrolyzing 5'-pApG to 5'-ApG. Counteracts the function of the 3'3'-cGAMP synthase DncV, and is involved in the modulation of intracellular 3'3'-cGAMP levels. Enhances bacterial chemotaxis and inhibits intestinal colonization in vivo. Thus exerts a crucial role in regulating bacterial infectivity through catalyzing 3'3'-cGAMP degradation. Is specific for 3'3'-cGAMP since it cannot degrade other cGAMP linkage isomers (3'2'-, 2'3'-, and 2'2'-cGAMPs). Is also able to hydrolyze c-di-GMP but not c-di-AMP. This is 3'3'-cGAMP-specific phosphodiesterase 1 from Vibrio cholerae serotype O1 (strain ATCC 39315 / El Tor Inaba N16961).